The sequence spans 390 residues: Altered inheritance of mitochondria protein 6 (390 aa).

A signal peptide spans 1 to 26 (MLGLKGCLTILIGYVIAVCALFSSRG).

It belongs to the AIM6 family.

The chain is Altered inheritance of mitochondria protein 6 (AIM6) from Saccharomyces cerevisiae (strain YJM789) (Baker's yeast).